The following is a 118-amino-acid chain: uncharacterized protein (118 aa).

Residues 1-118 (MASARGAKQS…AARQNEKTAR (118 aa)) form a disordered region. A compositionally biased stretch (low complexity) spans 13–28 (RVGTTRYTETSTVRVE). Over residues 29-49 (TSSHRVETSSRRVETSQRRSE) the composition is skewed to basic and acidic residues.

This is an uncharacterized protein from Homo sapiens (Human).